A 332-amino-acid polypeptide reads, in one-letter code: uncharacterized protein (332 aa).

Residues 185-205 (MVYGYSVFNAFFILLALPNVI) form a helical membrane-spanning segment.

The protein resides in the host membrane. This is an uncharacterized protein from Sulfolobus islandicus filamentous virus (isolate Iceland/Hveragerdi) (SIFV).